The sequence spans 72 residues: Guanine nucleotide-binding protein subunit gamma (72 aa).

The disordered stretch occupies residues 32–72; that stretch reads MVSVAPPKANPSVSSKTKQQQHFKPGKATKDKATTKCCTIS. Cysteine 68 carries S-palmitoyl cysteine lipidation. Cysteine 69 carries the post-translational modification Cysteine methyl ester. A lipid anchor (S-farnesyl cysteine) is attached at cysteine 69. A propeptide spans 70–72 (removed in mature form); it reads TIS.

Belongs to the G protein gamma family. G proteins are composed of 3 units, alpha, beta and gamma. Binding of the beta-gamma subunit complex (git5-git11) to the alpha subunit (gpa2) facilitates interaction with GPCR git3.

It is found in the cell membrane. Gamma subunit of the heterotrimeric guanine nucleotide-binding protein (G protein) involved in glucose-induced cAMP signaling. The beta-gamma subunits (git5-git11) promote binding of the alpha subunit gpa2 to GPCR git3, which senses extracellular glucose, to activate cAMP-PKA signaling and repress sexual development and gluconeogenesis. This Schizosaccharomyces pombe (strain 972 / ATCC 24843) (Fission yeast) protein is Guanine nucleotide-binding protein subunit gamma (git11).